The following is a 222-amino-acid chain: Protein-L-isoaspartate O-methyltransferase (222 aa).

The active site involves S65.

This sequence belongs to the methyltransferase superfamily. L-isoaspartyl/D-aspartyl protein methyltransferase family.

It localises to the cytoplasm. The enzyme catalyses [protein]-L-isoaspartate + S-adenosyl-L-methionine = [protein]-L-isoaspartate alpha-methyl ester + S-adenosyl-L-homocysteine. Catalyzes the methyl esterification of L-isoaspartyl residues in peptides and proteins that result from spontaneous decomposition of normal L-aspartyl and L-asparaginyl residues. It plays a role in the repair and/or degradation of damaged proteins. The protein is Protein-L-isoaspartate O-methyltransferase of Chlorobium luteolum (strain DSM 273 / BCRC 81028 / 2530) (Pelodictyon luteolum).